We begin with the raw amino-acid sequence, 262 residues long: Translation initiation factor 2 subunit alpha (262 aa).

The region spanning 15 to 86 is the S1 motif domain; that stretch reads GELVVGTVHK…RKGHVDVSMK (72 aa).

Belongs to the eIF-2-alpha family. In terms of assembly, heterotrimer composed of an alpha, a beta and a gamma chain.

In terms of biological role, eIF-2 functions in the early steps of protein synthesis by forming a ternary complex with GTP and initiator tRNA. In Methanothermobacter thermautotrophicus (strain ATCC 29096 / DSM 1053 / JCM 10044 / NBRC 100330 / Delta H) (Methanobacterium thermoautotrophicum), this protein is Translation initiation factor 2 subunit alpha (eif2a).